A 424-amino-acid chain; its full sequence is tRNA (guanine-N(7)-)-methyltransferase non-catalytic subunit wuho (424 aa).

A disordered region spans residues 42–92 (LKGHTSQSQESCTAAAAASTATAASGQAPGGKEQQLANQPEEGGTSASASG). A compositionally biased stretch (low complexity) spans 46 to 68 (TSQSQESCTAAAAASTATAASGQ). WD repeat units follow at residues 96-137 (ATST…ARLL), 184-223 (GHLS…DIHS), 227-265 (GHRE…ELLQ), and 324-364 (AGSW…PASS).

The protein belongs to the WD repeat TRM82 family. As to quaternary structure, forms a heterodimer with the catalytic subunit Mettl1. Interacts with mei-P26 and weakly interacts with bgcn; required for the function or formation of the mei-P26-bgcn-bam-sxl complex. Interacts with nanos; may be involved in mei-P26-dependent derepression of the BMP signaling pathway. Interacts with Myc; the interaction may be mediated by mei-P26 and may be involved in the regulation of ribosome biogenesis. As to expression, in testis, it is present at high level in hub cells, a niche for germline stem cells of testis. Ubiquitously expressed in all testicular cells throughout spermatogenesis. Ubiquitously expressed in all germline and somatic cells of the ovary.

It localises to the nucleus. The protein resides in the cytoplasm. It participates in tRNA modification; N(7)-methylguanine-tRNA biosynthesis. Its function is as follows. Required for the Mettl1-dependent formation of N(7)-methylguanine at position 46 (m7G46) in tRNA. In the Mettl1-wuho methyltransferase complex, it is required to stabilize and induce conformational changes of the catalytic subunit. Required for binding of nanos mRNA and repression of translation by the mei-P26-bgcn-bam-sxl complex. May cooperate with mei-P26 and nanos to derepress the BMP signaling pathway. May cooperate with mei-P26 to suppress expression of a subset of microRNAs. May cooperate with mei-P26 to regulate bam expression levels in germline cells during gametogenesis. Required to promote mitosis to meiosis transition during gametogenesis. May regulate germline cell division in part by regulating ribosome biogenesis. The chain is tRNA (guanine-N(7)-)-methyltransferase non-catalytic subunit wuho from Drosophila melanogaster (Fruit fly).